The primary structure comprises 461 residues: Photosystem II CP43 reaction center protein (461 aa).

Residues 1–2 (ME) constitute a propeptide that is removed on maturation. An N-acetylthreonine modification is found at threonine 3. At threonine 3 the chain carries Phosphothreonine. 5 helical membrane-spanning segments follow: residues 57 to 81 (LFEVAHFVPEKPMYEQGLILLPHLA), 122 to 143 (LLGPETLEESFPFFGYVWKDRN), 166 to 188 (KALYFGGVYDTWAPGGGDVRKIT), 243 to 263 (KPFAWARRALVWSGEAYLSYS), and 279 to 300 (WFNNTAYPSEFYGPTGPEASQA). Glutamate 355 serves as a coordination point for [CaMn4O5] cluster. The helical transmembrane segment at 435–459 (RARAAAAGFEKGIDRDFEPVLSMTP) threads the bilayer.

Belongs to the PsbB/PsbC family. PsbC subfamily. PSII is composed of 1 copy each of membrane proteins PsbA, PsbB, PsbC, PsbD, PsbE, PsbF, PsbH, PsbI, PsbJ, PsbK, PsbL, PsbM, PsbT, PsbX, PsbY, PsbZ, Psb30/Ycf12, at least 3 peripheral proteins of the oxygen-evolving complex and a large number of cofactors. It forms dimeric complexes. Binds multiple chlorophylls and provides some of the ligands for the Ca-4Mn-5O cluster of the oxygen-evolving complex. It may also provide a ligand for a Cl- that is required for oxygen evolution. PSII binds additional chlorophylls, carotenoids and specific lipids. serves as cofactor.

Its subcellular location is the plastid. The protein resides in the chloroplast thylakoid membrane. Its function is as follows. One of the components of the core complex of photosystem II (PSII). It binds chlorophyll and helps catalyze the primary light-induced photochemical processes of PSII. PSII is a light-driven water:plastoquinone oxidoreductase, using light energy to abstract electrons from H(2)O, generating O(2) and a proton gradient subsequently used for ATP formation. This chain is Photosystem II CP43 reaction center protein, found in Gossypium barbadense (Sea Island cotton).